The chain runs to 178 residues: S-alkylcysteine N-acetyltransferase (178 aa).

The 160-residue stretch at 4 to 163 (DIFRLATVED…IGVMMHKVLI (160 aa)) folds into the N-acetyltransferase domain.

It belongs to the acetyltransferase family.

The enzyme catalyses an S-substituted L-cysteine + acetyl-CoA = an N-acetyl-L-cysteine-S-conjugate + CoA + H(+). It carries out the reaction S-benzyl-L-cysteine + acetyl-CoA = N-acetyl-S-benzyl-L-cysteine + CoA + H(+). The catalysed reaction is S-methyl-L-cysteine + acetyl-CoA = N-acetyl-S-methyl-L-cysteine + CoA + H(+). It participates in amino-acid metabolism. In terms of biological role, involved in a cysteine salvage pathway from S-alkylcysteine. Catalyzes the first step in this pathway, i.e. the amine acetylation of an S-alkylcysteine with a preference for S-benzyl-L-cysteine over S-methyl-L-cysteine. This pathway is likely important in the catabolism of alkylated cysteine generated by proteolysis of alkylated glutathione formed in the detoxification of a wide range of electrophiles. This Bacillus subtilis (strain 168) protein is S-alkylcysteine N-acetyltransferase.